The following is a 362-amino-acid chain: Histidinol-phosphate aminotransferase (362 aa).

N6-(pyridoxal phosphate)lysine is present on lysine 218.

The protein belongs to the class-II pyridoxal-phosphate-dependent aminotransferase family. Histidinol-phosphate aminotransferase subfamily. In terms of assembly, homodimer. Pyridoxal 5'-phosphate serves as cofactor.

The enzyme catalyses L-histidinol phosphate + 2-oxoglutarate = 3-(imidazol-4-yl)-2-oxopropyl phosphate + L-glutamate. It functions in the pathway amino-acid biosynthesis; L-histidine biosynthesis; L-histidine from 5-phospho-alpha-D-ribose 1-diphosphate: step 7/9. The chain is Histidinol-phosphate aminotransferase from Ruegeria sp. (strain TM1040) (Silicibacter sp.).